A 154-amino-acid chain; its full sequence is Myoglobin (154 aa).

Residues 2-148 (GLSDGEWQLV…FRNDIAAKYK (147 aa)) form the Globin domain. Ser-4 bears the Phosphoserine mark. His-65 is a nitrite binding site. His-65 contributes to the O2 binding site. At Thr-68 the chain carries Phosphothreonine. His-94 contributes to the heme b binding site.

In terms of assembly, monomer.

The protein localises to the cytoplasm. It localises to the sarcoplasm. The catalysed reaction is Fe(III)-heme b-[protein] + nitric oxide + H2O = Fe(II)-heme b-[protein] + nitrite + 2 H(+). It carries out the reaction H2O2 + AH2 = A + 2 H2O. In terms of biological role, monomeric heme protein which primary function is to store oxygen and facilitate its diffusion within muscle tissues. Reversibly binds oxygen through a pentacoordinated heme iron and enables its timely and efficient release as needed during periods of heightened demand. Depending on the oxidative conditions of tissues and cells, and in addition to its ability to bind oxygen, it also has a nitrite reductase activity whereby it regulates the production of bioactive nitric oxide. Under stress conditions, like hypoxia and anoxia, it also protects cells against reactive oxygen species thanks to its pseudoperoxidase activity. The sequence is that of Myoglobin from Hystrix cristata (North African crested porcupine).